We begin with the raw amino-acid sequence, 35 residues long: Peptide ToHyp2 (35 aa).

A compositionally biased stretch (pro residues) spans L1 to H29. Residues L1–P35 form a disordered region. 8 positions are modified to hydroxyproline: P5, P9, P10, P12, P16, P20, P31, and P35.

O-glycosylated; contains pentose side chains at some or all of the hydroxyproline residues. Glycosylation is required for full antifungal activity.

Antimicrobial peptide. Inhibits elongation of hyphae in B.sorokiniana (IC(50)=3.8 uM) but has no effect on this process or on germination of conidia in a panel of other phytopathogenic fungi. At concentrations above 10 uM, has antibacterial activity. The polypeptide is Peptide ToHyp2 (Taraxacum officinale (Common dandelion)).